Reading from the N-terminus, the 206-residue chain is Ribosomal RNA small subunit methyltransferase G (206 aa).

S-adenosyl-L-methionine-binding positions include G73, L78, 124–125, and R139; that span reads VE.

This sequence belongs to the methyltransferase superfamily. RNA methyltransferase RsmG family.

It is found in the cytoplasm. The catalysed reaction is guanosine(527) in 16S rRNA + S-adenosyl-L-methionine = N(7)-methylguanosine(527) in 16S rRNA + S-adenosyl-L-homocysteine. Its function is as follows. Specifically methylates the N7 position of guanine in position 527 of 16S rRNA. The chain is Ribosomal RNA small subunit methyltransferase G from Photobacterium profundum (strain SS9).